The chain runs to 619 residues: Dihydroxy-acid dehydratase (619 aa).

Residue Asp-81 participates in Mg(2+) binding. Cys-122 contributes to the [2Fe-2S] cluster binding site. Asp-123 and Lys-124 together coordinate Mg(2+). An N6-carboxylysine modification is found at Lys-124. Cys-195 is a [2Fe-2S] cluster binding site. Glu-494 provides a ligand contact to Mg(2+). Ser-520 functions as the Proton acceptor in the catalytic mechanism.

This sequence belongs to the IlvD/Edd family. In terms of assembly, homodimer. Requires [2Fe-2S] cluster as cofactor. It depends on Mg(2+) as a cofactor.

The catalysed reaction is (2R)-2,3-dihydroxy-3-methylbutanoate = 3-methyl-2-oxobutanoate + H2O. It catalyses the reaction (2R,3R)-2,3-dihydroxy-3-methylpentanoate = (S)-3-methyl-2-oxopentanoate + H2O. It functions in the pathway amino-acid biosynthesis; L-isoleucine biosynthesis; L-isoleucine from 2-oxobutanoate: step 3/4. It participates in amino-acid biosynthesis; L-valine biosynthesis; L-valine from pyruvate: step 3/4. Functionally, functions in the biosynthesis of branched-chain amino acids. Catalyzes the dehydration of (2R,3R)-2,3-dihydroxy-3-methylpentanoate (2,3-dihydroxy-3-methylvalerate) into 2-oxo-3-methylpentanoate (2-oxo-3-methylvalerate) and of (2R)-2,3-dihydroxy-3-methylbutanoate (2,3-dihydroxyisovalerate) into 2-oxo-3-methylbutanoate (2-oxoisovalerate), the penultimate precursor to L-isoleucine and L-valine, respectively. The protein is Dihydroxy-acid dehydratase of Shewanella denitrificans (strain OS217 / ATCC BAA-1090 / DSM 15013).